A 271-amino-acid polypeptide reads, in one-letter code: Orotidine 5'-phosphate decarboxylase (271 aa).

Residue K95 is the Proton donor of the active site.

It belongs to the OMP decarboxylase family. Type 2 subfamily.

The enzyme catalyses orotidine 5'-phosphate + H(+) = UMP + CO2. Its pathway is pyrimidine metabolism; UMP biosynthesis via de novo pathway; UMP from orotate: step 2/2. The protein is Orotidine 5'-phosphate decarboxylase (pyrF) of Ralstonia nicotianae (strain ATCC BAA-1114 / GMI1000) (Ralstonia solanacearum).